We begin with the raw amino-acid sequence, 374 residues long: 1,3,6,8-tetrahydroxynaphthalene synthase (374 aa).

Cys138 is an active-site residue.

This sequence belongs to the thiolase-like superfamily. Chalcone/stilbene synthases family. Homodimer.

It carries out the reaction 5 malonyl-CoA + 5 H(+) = naphthalene-1,3,6,8-tetrol + 5 CO2 + 5 CoA + H2O. It participates in pigment biosynthesis; melanin biosynthesis. Functionally, involved in the biosynthesis of melanin but also various secondary metabolites containing a naphthoquinone ring. Catalyzes the iterative condensation of five CoA-linked malonyl units to form a pentaketide intermediate. THNS subsequently catalyzes the dual intramolecular Claisen and aldol condensations of this linear intermediate to produce the fused ring of 1,3,6,8-tetrahydroxynaphthalene (THN). The protein is 1,3,6,8-tetrahydroxynaphthalene synthase of Streptomyces coelicolor (strain ATCC BAA-471 / A3(2) / M145).